Here is a 226-residue protein sequence, read N- to C-terminus: 2,3-bisphosphoglycerate-dependent phosphoglycerate mutase (226 aa).

Substrate contacts are provided by residues 8–15 (RHGQSQWN), 21–22 (TG), arginine 58, 112–115 (ERMY), lysine 123, 139–140 (RR), and 183–184 (GN). Histidine 9 acts as the Tele-phosphohistidine intermediate in catalysis. The active-site Proton donor/acceptor is the glutamate 112.

This sequence belongs to the phosphoglycerate mutase family. BPG-dependent PGAM subfamily.

It catalyses the reaction (2R)-2-phosphoglycerate = (2R)-3-phosphoglycerate. It functions in the pathway carbohydrate degradation; glycolysis; pyruvate from D-glyceraldehyde 3-phosphate: step 3/5. Its function is as follows. Catalyzes the interconversion of 2-phosphoglycerate and 3-phosphoglycerate. This Protochlamydia amoebophila (strain UWE25) protein is 2,3-bisphosphoglycerate-dependent phosphoglycerate mutase.